Consider the following 965-residue polypeptide: FKBP12-associated protein 1 (965 aa).

Residues 68–118 (CMICTVEMDYTCQMFACKRCYRVFDYGCIREWALKSTEKTVDRIWKCPNCY) form an RING-type; degenerate zinc finger. 5 consecutive NF-X1-type zinc fingers follow at residues 159–177 (CMHG…ECTR), 216–235 (CSIH…PCPE), 362–382 (CGKH…PCLQ), 468–487 (CGIH…PCLE), and 586–606 (CYHT…VCKQ). The R3H domain occupies 733–796 (ERWCSQIEAI…MRSVFIKKED (64 aa)). Threonine 951 bears the Phosphothreonine mark. A Phosphoserine modification is found at serine 958.

This sequence belongs to the NFX1 family. In terms of assembly, interacts with FPR1.

It is found in the cytoplasm. It localises to the nucleus. Its function is as follows. May play a role in transcription regulation. In Saccharomyces cerevisiae (strain ATCC 204508 / S288c) (Baker's yeast), this protein is FKBP12-associated protein 1 (FAP1).